Reading from the N-terminus, the 372-residue chain is UDP-N-acetylglucosamine--N-acetylmuramyl-(pentapeptide) pyrophosphoryl-undecaprenol N-acetylglucosamine transferase (372 aa).

UDP-N-acetyl-alpha-D-glucosamine contacts are provided by residues 15–17 (TGG), asparagine 126, arginine 169, serine 197, and glutamine 299.

Belongs to the glycosyltransferase 28 family. MurG subfamily.

Its subcellular location is the cell inner membrane. The enzyme catalyses di-trans,octa-cis-undecaprenyl diphospho-N-acetyl-alpha-D-muramoyl-L-alanyl-D-glutamyl-meso-2,6-diaminopimeloyl-D-alanyl-D-alanine + UDP-N-acetyl-alpha-D-glucosamine = di-trans,octa-cis-undecaprenyl diphospho-[N-acetyl-alpha-D-glucosaminyl-(1-&gt;4)]-N-acetyl-alpha-D-muramoyl-L-alanyl-D-glutamyl-meso-2,6-diaminopimeloyl-D-alanyl-D-alanine + UDP + H(+). It functions in the pathway cell wall biogenesis; peptidoglycan biosynthesis. In terms of biological role, cell wall formation. Catalyzes the transfer of a GlcNAc subunit on undecaprenyl-pyrophosphoryl-MurNAc-pentapeptide (lipid intermediate I) to form undecaprenyl-pyrophosphoryl-MurNAc-(pentapeptide)GlcNAc (lipid intermediate II). The sequence is that of UDP-N-acetylglucosamine--N-acetylmuramyl-(pentapeptide) pyrophosphoryl-undecaprenol N-acetylglucosamine transferase from Methylobacterium sp. (strain 4-46).